A 414-amino-acid chain; its full sequence is Putative competence-damage inducible protein (414 aa).

Belongs to the CinA family.

The protein is Putative competence-damage inducible protein of Listeria monocytogenes serovar 1/2a (strain ATCC BAA-679 / EGD-e).